Consider the following 269-residue polypeptide: Putative aga operon transcriptional repressor (269 aa).

Residues 15-70 (TSERREQIIQRLRQQGSVQVNDLSALYGVSTVTIRNDLAFLEKQGIAVRAYGGALI) enclose the HTH deoR-type domain. The segment at residues 32-51 (VQVNDLSALYGVSTVTIRND) is a DNA-binding region (H-T-H motif).

Its function is as follows. Probable repressor for the aga operon for N-acetyl galactosamine transport and metabolism. This is Putative aga operon transcriptional repressor (agaR) from Escherichia coli O157:H7.